The following is a 391-amino-acid chain: Phosphoglycerate kinase (391 aa).

Residues 21–23, arginine 36, 59–62, arginine 113, and arginine 146 contribute to the substrate site; these read DLN and HLGR. Residues lysine 197, glutamate 319, and 345 to 348 each bind ATP; that span reads GGDT.

This sequence belongs to the phosphoglycerate kinase family. In terms of assembly, monomer.

It localises to the cytoplasm. The enzyme catalyses (2R)-3-phosphoglycerate + ATP = (2R)-3-phospho-glyceroyl phosphate + ADP. It participates in carbohydrate degradation; glycolysis; pyruvate from D-glyceraldehyde 3-phosphate: step 2/5. This chain is Phosphoglycerate kinase, found in Shewanella sp. (strain ANA-3).